A 210-amino-acid chain; its full sequence is Chloramphenicol acetyltransferase (210 aa).

Residue His-79 is part of the active site.

It belongs to the transferase hexapeptide repeat family.

The enzyme catalyses chloramphenicol + acetyl-CoA = chloramphenicol 3-acetate + CoA. Functionally, this enzyme is an effector of chloramphenicol resistance in bacteria. This chain is Chloramphenicol acetyltransferase (cat), found in Morganella morganii (Proteus morganii).